Here is a 164-residue protein sequence, read N- to C-terminus: Diphosphoinositol polyphosphate phosphohydrolase 3-beta (164 aa).

Substrate is bound by residues Arg9, 17 to 19, and 38 to 40; these read KKR and SSR. Residues 17–144 form the Nudix hydrolase domain; sequence KKRAACLCFR…VHAEYLQKLK (128 aa). Positions 49 and 65 each coordinate Mg(2+). A Nudix box motif is present at residues 50 to 71; that stretch reads GGMEPEEEPGGAAVREVFEEAG. The Proton acceptor role is filled by Glu68. Glu69 contributes to the Mg(2+) binding site. Residues 89–91, Arg115, and Lys133 contribute to the substrate site; that span reads RKH. The segment at 144–164 is disordered; sequence KLGGSPTNGNSVAPSPPEGDP.

This sequence belongs to the Nudix hydrolase family. DIPP subfamily. The cofactor is Mg(2+). Mn(2+) is required as a cofactor.

The protein resides in the cytoplasm. It carries out the reaction diphospho-myo-inositol polyphosphate + H2O = myo-inositol polyphosphate + phosphate.. The catalysed reaction is P(1),P(6)-bis(5'-adenosyl) hexaphosphate + H2O = adenosine 5'-pentaphosphate + AMP + 2 H(+). The enzyme catalyses P(1),P(5)-bis(5'-adenosyl) pentaphosphate + H2O = adenosine 5'-tetraphosphate + AMP + 2 H(+). In terms of biological role, cleaves a beta-phosphate from the diphosphate groups in PP-InsP5 (diphosphoinositol pentakisphosphate), suggesting that it may play a role in signal transduction. Also able to catalyze the hydrolysis of dinucleoside oligophosphates, with Ap6A and Ap5A being the preferred substrates. The major reaction products are ADP and p4a from Ap6A and ADP and ATP from Ap5A. Also able to hydrolyze 5-phosphoribose 1-diphosphate. The protein is Diphosphoinositol polyphosphate phosphohydrolase 3-beta of Bos taurus (Bovine).